The primary structure comprises 251 residues: Flap endonuclease Xni (251 aa).

A Mg(2+)-binding site is contributed by aspartate 104. Residues 160–249 (VLPRQLPDYW…IDGNLQQLRL (90 aa)) form the 5'-3' exonuclease domain. Positions 171, 172, 180, 182, and 185 each coordinate K(+). The tract at residues 184-189 (GIGPKS) is interaction with DNA.

It belongs to the Xni family. It depends on Mg(2+) as a cofactor. K(+) is required as a cofactor.

Its function is as follows. Has flap endonuclease activity. During DNA replication, flap endonucleases cleave the 5'-overhanging flap structure that is generated by displacement synthesis when DNA polymerase encounters the 5'-end of a downstream Okazaki fragment. This chain is Flap endonuclease Xni, found in Salmonella newport (strain SL254).